The primary structure comprises 696 residues: Two-component response regulator ORR22 (696 aa).

The 116-residue stretch at 27-142 folds into the Response regulatory domain; that stretch reads RVLAVDDDPV…ELRNIWQHVV (116 aa). D78 bears the 4-aspartylphosphate mark. Positions 154 to 214 are disordered; the sequence is LDFSKECNKP…DYQENDEPSA (61 aa). A compositionally biased stretch (polar residues) spans 176–185; sequence TCGSSDQNGR. The segment covering 195–211 has biased composition (acidic residues); sequence GEDDDEGDDNDYQENDE. The myb-like GARP DNA-binding region spans 214–273; that stretch reads AAKKPRVVWSVELHRKFVAAVNQLGIDKAVPKRILELMNVEKLTRENVASHLQKYRLYLK.

This sequence belongs to the ARR family. Type-B subfamily. In terms of processing, two-component system major event consists of a His-to-Asp phosphorelay between a sensor histidine kinase (HK) and a response regulator (RR). In plants, the His-to-Asp phosphorelay involves an additional intermediate named Histidine-containing phosphotransfer protein (HPt). This multistep phosphorelay consists of a His-Asp-His-Asp sequential transfer of a phosphate group between first a His and an Asp of the HK protein, followed by the transfer to a conserved His of the HPt protein and finally the transfer to an Asp in the receiver domain of the RR protein.

The protein resides in the nucleus. Transcriptional activator that binds specific DNA sequence. Functions as a response regulator involved in His-to-Asp phosphorelay signal transduction system. Phosphorylation of the Asp residue in the receiver domain activates the ability of the protein to promote the transcription of target genes. May directly activate some type-A response regulators in response to cytokinins. The protein is Two-component response regulator ORR22 of Oryza sativa subsp. indica (Rice).